Here is a 482-residue protein sequence, read N- to C-terminus: O-phosphoseryl-tRNA(Sec) selenium transferase (482 aa).

Residues 1-36 (MKSSFGKKEGEYSRLVSKSSNKLLNSLWEKKQIPEE) are tetramerization. Arginine 69 contacts pyridoxal 5'-phosphate. Residues 90-100 (GRSGNLLEIQP) are phosphate loop (P-loop). Substrate contacts are provided by arginine 91, serine 92, and glutamine 99. The residue at position 277 (lysine 277) is an N6-(pyridoxal phosphate)lysine. Substrate is bound at residue arginine 306. Residue arginine 388 participates in tRNA binding. The segment at 461-482 (DRRGGSSGRRVPMNESFDMEND) is disordered.

Belongs to the SepSecS family. Homotetramer formed by a catalytic dimer and a non-catalytic dimer serving as a binding platform that orients tRNASec for catalysis. Each tetramer binds the CCA ends of two tRNAs which point to the active sites of the catalytic dimer. It depends on pyridoxal 5'-phosphate as a cofactor.

It localises to the cytoplasm. The enzyme catalyses O-phospho-L-seryl-tRNA(Sec) + selenophosphate + H2O = L-selenocysteinyl-tRNA(Sec) + 2 phosphate. Its pathway is aminoacyl-tRNA biosynthesis; selenocysteinyl-tRNA(Sec) biosynthesis; selenocysteinyl-tRNA(Sec) from L-seryl-tRNA(Sec) (archaeal/eukaryal route): step 2/2. In terms of biological role, converts O-phosphoseryl-tRNA(Sec) to selenocysteinyl-tRNA(Sec) required for selenoprotein biosynthesis. This chain is O-phosphoseryl-tRNA(Sec) selenium transferase (secs-1), found in Caenorhabditis briggsae.